A 290-amino-acid polypeptide reads, in one-letter code: Fructose-1,6-bisphosphatase class 1 (290 aa).

Mg(2+) contacts are provided by Glu78, Asp96, Leu98, and Asp99. Residues Asp99 to Ser102, Tyr201, and Lys226 contribute to the substrate site. Position 232 (Glu232) interacts with Mg(2+).

It belongs to the FBPase class 1 family. As to quaternary structure, homotetramer. Mg(2+) is required as a cofactor.

It localises to the cytoplasm. The catalysed reaction is beta-D-fructose 1,6-bisphosphate + H2O = beta-D-fructose 6-phosphate + phosphate. The protein operates within carbohydrate biosynthesis; gluconeogenesis. This is Fructose-1,6-bisphosphatase class 1 from Helicobacter pylori (strain HPAG1).